The sequence spans 331 residues: Fructose-1,6-bisphosphatase class 1 2 (331 aa).

Residues Glu80, Asp98, Leu100, and Asp101 each contribute to the Mg(2+) site. Substrate contacts are provided by residues 101-104 (DGSS) and Asn189. A Mg(2+)-binding site is contributed by Glu261.

It belongs to the FBPase class 1 family. As to quaternary structure, homotetramer. Mg(2+) is required as a cofactor.

It is found in the cytoplasm. The enzyme catalyses beta-D-fructose 1,6-bisphosphate + H2O = beta-D-fructose 6-phosphate + phosphate. Its pathway is carbohydrate biosynthesis; Calvin cycle. In Cereibacter sphaeroides (strain ATCC 17023 / DSM 158 / JCM 6121 / CCUG 31486 / LMG 2827 / NBRC 12203 / NCIMB 8253 / ATH 2.4.1.) (Rhodobacter sphaeroides), this protein is Fructose-1,6-bisphosphatase class 1 2.